A 118-amino-acid chain; its full sequence is Large ribosomal subunit protein bL20 (118 aa).

It belongs to the bacterial ribosomal protein bL20 family.

Functionally, binds directly to 23S ribosomal RNA and is necessary for the in vitro assembly process of the 50S ribosomal subunit. It is not involved in the protein synthesizing functions of that subunit. This is Large ribosomal subunit protein bL20 from Methylibium petroleiphilum (strain ATCC BAA-1232 / LMG 22953 / PM1).